The chain runs to 303 residues: UDP-N-acetylenolpyruvoylglucosamine reductase (303 aa).

Residues 27 to 217 (KVGGISQVFY…QTVRKLTQPI (191 aa)) form the FAD-binding PCMH-type domain. Arg-175 is an active-site residue. Ser-224 functions as the Proton donor in the catalytic mechanism. Glu-294 is an active-site residue.

The protein belongs to the MurB family. It depends on FAD as a cofactor.

The protein localises to the cytoplasm. It catalyses the reaction UDP-N-acetyl-alpha-D-muramate + NADP(+) = UDP-N-acetyl-3-O-(1-carboxyvinyl)-alpha-D-glucosamine + NADPH + H(+). It participates in cell wall biogenesis; peptidoglycan biosynthesis. Functionally, cell wall formation. The chain is UDP-N-acetylenolpyruvoylglucosamine reductase from Orientia tsutsugamushi (strain Ikeda) (Rickettsia tsutsugamushi).